The sequence spans 310 residues: MSENRIRIATRKSPLAMWQAEFVKAELERIHPGIVVELLPMSTKGDVILDTPLAKVGGKGLFVKELEVAMLDDLADIAVHSMKDVPVDFPEGLGLEVICEREDPRDAFVSNLYKSISELPLGATVGTSSLRRQCQIRASRPDLIIKDLRGNVGTRLAKLDNGEYDAIILAAAGLIRLKLSERIASFISAEESLPANGQGAVGIECRINDERVKALLAPLEHLETRYRVLAERAMNTRLEGGCQVPIGAFAEIDGDEMTLRGLVGNPDGSEIIEGVITGPKTEATQLGVALAEELLSKGAKTILDAVYAKA.

Residue Cys-242 is modified to S-(dipyrrolylmethanemethyl)cysteine.

This sequence belongs to the HMBS family. Monomer. Dipyrromethane serves as cofactor.

It carries out the reaction 4 porphobilinogen + H2O = hydroxymethylbilane + 4 NH4(+). It functions in the pathway porphyrin-containing compound metabolism; protoporphyrin-IX biosynthesis; coproporphyrinogen-III from 5-aminolevulinate: step 2/4. Its function is as follows. Tetrapolymerization of the monopyrrole PBG into the hydroxymethylbilane pre-uroporphyrinogen in several discrete steps. This Shewanella baltica (strain OS155 / ATCC BAA-1091) protein is Porphobilinogen deaminase.